A 63-amino-acid polypeptide reads, in one-letter code: Conotoxin Cal6.28 (63 aa).

Positions 1–22 (MKLTCVLIVAVLILTACQVIAA) are cleaved as a signal peptide. 3 disulfide bridges follow: cysteine 34/cysteine 45, cysteine 37/cysteine 51, and cysteine 44/cysteine 58.

It belongs to the conotoxin O1 superfamily. In terms of tissue distribution, expressed by the venom duct.

It localises to the secreted. Probable neurotoxin. The chain is Conotoxin Cal6.28 from Californiconus californicus (California cone).